A 491-amino-acid chain; its full sequence is Proline--tRNA ligase (491 aa).

Belongs to the class-II aminoacyl-tRNA synthetase family. ProS type 3 subfamily. Homodimer.

The protein localises to the cytoplasm. It catalyses the reaction tRNA(Pro) + L-proline + ATP = L-prolyl-tRNA(Pro) + AMP + diphosphate. In terms of biological role, catalyzes the attachment of proline to tRNA(Pro) in a two-step reaction: proline is first activated by ATP to form Pro-AMP and then transferred to the acceptor end of tRNA(Pro). This Amoebophilus asiaticus (strain 5a2) protein is Proline--tRNA ligase.